The primary structure comprises 362 residues: Chorismate synthase (362 aa).

NADP(+)-binding residues include R48 and R54. FMN contacts are provided by residues 125 to 127 (RSS), 238 to 239 (NA), G278, 293 to 297 (KPTSS), and R319.

The protein belongs to the chorismate synthase family. As to quaternary structure, homotetramer. Requires FMNH2 as cofactor.

The catalysed reaction is 5-O-(1-carboxyvinyl)-3-phosphoshikimate = chorismate + phosphate. It participates in metabolic intermediate biosynthesis; chorismate biosynthesis; chorismate from D-erythrose 4-phosphate and phosphoenolpyruvate: step 7/7. Functionally, catalyzes the anti-1,4-elimination of the C-3 phosphate and the C-6 proR hydrogen from 5-enolpyruvylshikimate-3-phosphate (EPSP) to yield chorismate, which is the branch point compound that serves as the starting substrate for the three terminal pathways of aromatic amino acid biosynthesis. This reaction introduces a second double bond into the aromatic ring system. The chain is Chorismate synthase from Tolumonas auensis (strain DSM 9187 / NBRC 110442 / TA 4).